A 293-amino-acid polypeptide reads, in one-letter code: Methylsterol monooxygenase 1 (293 aa).

2 helical membrane-spanning segments follow: residues 55 to 75 (LIVHEALYFFFCLPGFLFQFI) and 100 to 120 (VLLFNHFCIQFPLICGTYYFT). Positions 145–274 (CAVIEDTWHY…FTWWDRIFGT (130 aa)) constitute a Fatty acid hydroxylase domain. A Histidine box-1 motif is present at residues 157 to 161 (HRLLH). Positions 170–174 (HKIHH) match the Histidine box-2 motif. The helical transmembrane segment at 199–219 (FFIGIMLLCDHVILLWAWVTV) threads the bilayer. The Histidine box-3 signature appears at 249-255 (HHDFHHM).

It belongs to the sterol desaturase family. Requires Fe cation as cofactor. Ubiquitinated by MARCHF6, leading to proteasomal degradation.

Its subcellular location is the endoplasmic reticulum membrane. It catalyses the reaction 4,4-dimethyl-5alpha-cholest-7-en-3beta-ol + 6 Fe(II)-[cytochrome b5] + 3 O2 + 5 H(+) = 4alpha-carboxy-4beta-methyl-5alpha-cholest-7-ene-3beta-ol + 6 Fe(III)-[cytochrome b5] + 4 H2O. It carries out the reaction 4,4-dimethyl-5alpha-cholesta-8,24-dien-3beta-ol + 6 Fe(II)-[cytochrome b5] + 3 O2 + 5 H(+) = 4beta-methylzymosterol-4alpha-carboxylate + 6 Fe(III)-[cytochrome b5] + 4 H2O. The catalysed reaction is 4alpha-methylzymosterol + 6 Fe(II)-[cytochrome b5] + 3 O2 + 5 H(+) = 4alpha-carboxyzymosterol + 6 Fe(III)-[cytochrome b5] + 4 H2O. The enzyme catalyses 4alpha-methyl-5alpha-cholest-7-en-3beta-ol + 6 Fe(II)-[cytochrome b5] + 3 O2 + 5 H(+) = 4alpha-carboxy-5alpha-cholest-7-en-3beta-ol + 6 Fe(III)-[cytochrome b5] + 4 H2O. It catalyses the reaction 4,4-dimethyl-5alpha-cholest-8-en-3beta-ol + 6 Fe(II)-[cytochrome b5] + 3 O2 + 5 H(+) = 4alpha-carboxy-4beta-methyl-5alpha-cholest-8-en-3beta-ol + 6 Fe(III)-[cytochrome b5] + 4 H2O. It carries out the reaction 4alpha-methyl-5alpha-cholest-8-en-3beta-ol + 6 Fe(II)-[cytochrome b5] + 3 O2 + 5 H(+) = 4alpha-carboxy-5alpha-cholest-8-ene-3beta-ol + 6 Fe(III)-[cytochrome b5] + 4 H2O. It functions in the pathway steroid biosynthesis; zymosterol biosynthesis; zymosterol from lanosterol: step 3/6. The protein operates within steroid biosynthesis; cholesterol biosynthesis. Functionally, catalyzes the three-step monooxygenation required for the demethylation of 4,4-dimethyl and 4alpha-methylsterols, which can be subsequently metabolized to cholesterol. The polypeptide is Methylsterol monooxygenase 1 (MSMO1) (Sus scrofa (Pig)).